We begin with the raw amino-acid sequence, 221 residues long: Probable septum site-determining protein MinC (221 aa).

The protein belongs to the MinC family. In terms of assembly, interacts with MinD and FtsZ.

Functionally, cell division inhibitor that blocks the formation of polar Z ring septums. Rapidly oscillates between the poles of the cell to destabilize FtsZ filaments that have formed before they mature into polar Z rings. Prevents FtsZ polymerization. The polypeptide is Probable septum site-determining protein MinC (Shewanella frigidimarina (strain NCIMB 400)).